A 119-amino-acid polypeptide reads, in one-letter code: Large ribosomal subunit protein bL20 (119 aa).

This sequence belongs to the bacterial ribosomal protein bL20 family.

Binds directly to 23S ribosomal RNA and is necessary for the in vitro assembly process of the 50S ribosomal subunit. It is not involved in the protein synthesizing functions of that subunit. In Anoxybacillus flavithermus (strain DSM 21510 / WK1), this protein is Large ribosomal subunit protein bL20.